We begin with the raw amino-acid sequence, 196 residues long: Large ribosomal subunit protein bL9 (196 aa).

Belongs to the bacterial ribosomal protein bL9 family.

Functionally, binds to the 23S rRNA. The polypeptide is Large ribosomal subunit protein bL9 (Rhodopseudomonas palustris (strain HaA2)).